The following is a 1350-amino-acid chain: ABC transporter G family member 45 (1350 aa).

The disordered stretch occupies residues 1-23 (MAAAVELTGDGGTTAETRWLSPP). Residues 85–357 (AACAHMCTTR…FETMGFKCPS (273 aa)) form the ABC transporter 1 domain. 118–125 (GAPGSGKT) is a binding site for ATP. The ABC transmembrane type-2 1 domain occupies 434–647 (NIFKACFSRE…AQNAVALNEF (214 aa)). The next 6 helical transmembrane spans lie at 453 to 473 (VHIF…TLFL), 491 to 511 (ALFM…AMTI), 523 to 543 (ILAL…LPIS), 557 to 577 (VIGY…LFAM), 597 to 617 (MANM…GFVI), and 683 to 703 (ICVS…IFAL). The ABC transporter 2 domain occupies 749–1001 (LVFDHINYFV…NMIKYFEAIP (253 aa)). 794–801 (GITGAGKT) serves as a coordination point for ATP. In terms of domain architecture, ABC transmembrane type-2 2 spans 1074 to 1288 (AQCMACLWKQ…TVYGLMFSQL (215 aa)). The next 7 membrane-spanning stretches (helical) occupy residues 1099-1119 (INTF…GSTI), 1126-1146 (FNIL…NCSI), 1181-1201 (LPYM…MIGF), 1208-1228 (FFWF…YGMM), 1238-1258 (IAAG…GFII), 1269-1289 (WVYW…SQLG), and 1322-1342 (LVTS…FLSI).

Belongs to the ABC transporter superfamily. ABCG family. PDR (TC 3.A.1.205) subfamily.

The protein localises to the membrane. Functionally, may be a general defense protein. This is ABC transporter G family member 45 from Oryza sativa subsp. japonica (Rice).